The sequence spans 481 residues: Probable glycine dehydrogenase (decarboxylating) subunit 2 (481 aa).

N6-(pyridoxal phosphate)lysine is present on Lys269.

It belongs to the GcvP family. C-terminal subunit subfamily. The glycine cleavage system is composed of four proteins: P, T, L and H. In this organism, the P 'protein' is a heterodimer of two subunits. Requires pyridoxal 5'-phosphate as cofactor.

It catalyses the reaction N(6)-[(R)-lipoyl]-L-lysyl-[glycine-cleavage complex H protein] + glycine + H(+) = N(6)-[(R)-S(8)-aminomethyldihydrolipoyl]-L-lysyl-[glycine-cleavage complex H protein] + CO2. Its function is as follows. The glycine cleavage system catalyzes the degradation of glycine. The P protein binds the alpha-amino group of glycine through its pyridoxal phosphate cofactor; CO(2) is released and the remaining methylamine moiety is then transferred to the lipoamide cofactor of the H protein. The protein is Probable glycine dehydrogenase (decarboxylating) subunit 2 of Chlorobium chlorochromatii (strain CaD3).